We begin with the raw amino-acid sequence, 222 residues long: MERKGSAAGAKGNPSPPAAGEGQRPPPPLCVPGGGGGAPARGQVGAAAEPAELIRRAHEFKSQGAQCYKDKKFREAIGKYHRALLELKGLLPPPGERERDSRPASPAGALKPGRLSEEQSKTVEAIEIDCYNSLAACLLQAELVNYERVKEYCLKVLKKEGENFKALYRSGVAFYHLGDYDKALYYLKEARTQQPTDTNVIRYIQLTEMKLSRCSQREKEAM.

Disordered stretches follow at residues 1–49 (MERK…AAAE) and 88–116 (KGLLPPPGERERDSRPASPAGALKPGRLS). Residues 56–89 (RAHEFKSQGAQCYKDKKFREAIGKYHRALLELKG) form a TPR 1 repeat. Phosphoserine is present on S105. TPR repeat units follow at residues 125 to 160 (AIEIDCYNSLAACLLQAELVNYERVKEYCLKVLKKE) and 161 to 194 (GENFKALYRSGVAFYHLGDYDKALYYLKEARTQQ).

It belongs to the TTC9 family.

The polypeptide is Tetratricopeptide repeat protein 9A (TTC9) (Homo sapiens (Human)).